The chain runs to 281 residues: Nucleoid occlusion protein (281 aa).

The tract at residues 1-26 is disordered; sequence MKHPFSRLFSFGEKEQEEAGGKQERE. A compositionally biased stretch (basic and acidic residues) spans 12–26; sequence GEKEQEEAGGKQERE. The segment at residues 145-164 is a DNA-binding region (H-T-H motif); it reads EALAQRLGKGQSTIANKLRL.

It belongs to the ParB family.

It is found in the cytoplasm. It localises to the nucleoid. Its function is as follows. Effects nucleoid occlusion by binding relatively nonspecifically to DNA and preventing the assembly of the division machinery in the vicinity of the nucleoid, especially under conditions that disturb the cell cycle. It helps to coordinate cell division and chromosome segregation by preventing the formation of the Z ring through the nucleoid, which would cause chromosome breakage. In Geobacillus thermodenitrificans (strain NG80-2), this protein is Nucleoid occlusion protein.